A 43-amino-acid polypeptide reads, in one-letter code: SPbeta prophage-derived uncharacterized protein YotD (43 aa).

The chain is SPbeta prophage-derived uncharacterized protein YotD (yotD) from Bacillus subtilis (strain 168).